The chain runs to 195 residues: Shikimate kinase (195 aa).

30-35 (GAGKTA) provides a ligand contact to ATP. Mg(2+) is bound at residue T34. Substrate contacts are provided by D52, R76, and G98. R136 contributes to the ATP binding site. R155 is a binding site for substrate.

This sequence belongs to the shikimate kinase family. Monomer. It depends on Mg(2+) as a cofactor.

The protein localises to the cytoplasm. The enzyme catalyses shikimate + ATP = 3-phosphoshikimate + ADP + H(+). Its pathway is metabolic intermediate biosynthesis; chorismate biosynthesis; chorismate from D-erythrose 4-phosphate and phosphoenolpyruvate: step 5/7. Its function is as follows. Catalyzes the specific phosphorylation of the 3-hydroxyl group of shikimic acid using ATP as a cosubstrate. The sequence is that of Shikimate kinase from Ruegeria pomeroyi (strain ATCC 700808 / DSM 15171 / DSS-3) (Silicibacter pomeroyi).